Here is a 145-residue protein sequence, read N- to C-terminus: Bacilliredoxin BLi02578/BL01507 (145 aa).

This sequence belongs to the bacilliredoxin family.

This is Bacilliredoxin BLi02578/BL01507 from Bacillus licheniformis (strain ATCC 14580 / DSM 13 / JCM 2505 / CCUG 7422 / NBRC 12200 / NCIMB 9375 / NCTC 10341 / NRRL NRS-1264 / Gibson 46).